Consider the following 1550-residue polypeptide: Pentafunctional AROM polypeptide (1550 aa).

Residues 1–379 (MSIERVPILG…YQLKAHQVSK (379 aa)) are 3-dehydroquinate synthase. Residues 42–44 (DTN), 80–83 (ENNK), 111–113 (GGV), and aspartate 116 contribute to the NAD(+) site. 7-phospho-2-dehydro-3-deoxy-D-arabino-heptonate is bound at residue arginine 127. 136-137 (TT) lines the NAD(+) pocket. The 7-phospho-2-dehydro-3-deoxy-D-arabino-heptonate site is built by aspartate 143 and lysine 149. Lysine 158 provides a ligand contact to NAD(+). Residue asparagine 159 participates in 7-phospho-2-dehydro-3-deoxy-D-arabino-heptonate binding. NAD(+) contacts are provided by residues 176 to 179 (FLET) and asparagine 187. A Zn(2+)-binding site is contributed by glutamate 191. Residues 191-194 (EVVK) and lysine 243 each bind 7-phospho-2-dehydro-3-deoxy-D-arabino-heptonate. Catalysis depends on glutamate 253, which acts as the Proton acceptor; for 3-dehydroquinate synthase activity. 7-phospho-2-dehydro-3-deoxy-D-arabino-heptonate contacts are provided by residues 257-261 (RNLLN) and histidine 264. Residue histidine 264 coordinates Zn(2+). Histidine 268 (proton acceptor; for 3-dehydroquinate synthase activity) is an active-site residue. Histidine 280 and lysine 351 together coordinate 7-phospho-2-dehydro-3-deoxy-D-arabino-heptonate. Histidine 280 serves as a coordination point for Zn(2+). Positions 392–837 (VHPFTNPPKE…WDILHSKFKI (446 aa)) are EPSP synthase. The segment at 857-1047 (DKGVIVIGMR…VPTGRSTAVV (191 aa)) is shikimate kinase. 864–871 (GMRGTGKS) contributes to the ATP binding site. Residues 1048–1257 (LTLPDLNNVA…NDDGLLTIGE (210 aa)) are 3-dehydroquinase. The active-site Schiff-base intermediate with substrate; for 3-dehydroquinate dehydratase activity is the arginine 1193. A shikimate dehydrogenase region spans residues 1270-1550 (AKKFWVIGSP…EIIHRAVVEE (281 aa)).

In the N-terminal section; belongs to the sugar phosphate cyclases superfamily. Dehydroquinate synthase family. This sequence in the 2nd section; belongs to the EPSP synthase family. It in the 3rd section; belongs to the shikimate kinase family. The protein in the 4th section; belongs to the type-I 3-dehydroquinase family. In the C-terminal section; belongs to the shikimate dehydrogenase family. Homodimer. Requires Zn(2+) as cofactor.

The protein localises to the cytoplasm. It catalyses the reaction 7-phospho-2-dehydro-3-deoxy-D-arabino-heptonate = 3-dehydroquinate + phosphate. The catalysed reaction is 3-dehydroquinate = 3-dehydroshikimate + H2O. It carries out the reaction shikimate + NADP(+) = 3-dehydroshikimate + NADPH + H(+). The enzyme catalyses shikimate + ATP = 3-phosphoshikimate + ADP + H(+). It catalyses the reaction 3-phosphoshikimate + phosphoenolpyruvate = 5-O-(1-carboxyvinyl)-3-phosphoshikimate + phosphate. It participates in metabolic intermediate biosynthesis; chorismate biosynthesis; chorismate from D-erythrose 4-phosphate and phosphoenolpyruvate: step 2/7. Its pathway is metabolic intermediate biosynthesis; chorismate biosynthesis; chorismate from D-erythrose 4-phosphate and phosphoenolpyruvate: step 3/7. The protein operates within metabolic intermediate biosynthesis; chorismate biosynthesis; chorismate from D-erythrose 4-phosphate and phosphoenolpyruvate: step 4/7. It functions in the pathway metabolic intermediate biosynthesis; chorismate biosynthesis; chorismate from D-erythrose 4-phosphate and phosphoenolpyruvate: step 5/7. It participates in metabolic intermediate biosynthesis; chorismate biosynthesis; chorismate from D-erythrose 4-phosphate and phosphoenolpyruvate: step 6/7. Its function is as follows. The AROM polypeptide catalyzes 5 consecutive enzymatic reactions in prechorismate polyaromatic amino acid biosynthesis. This Candida dubliniensis (strain CD36 / ATCC MYA-646 / CBS 7987 / NCPF 3949 / NRRL Y-17841) (Yeast) protein is Pentafunctional AROM polypeptide.